Consider the following 466-residue polypeptide: Asparagine--tRNA ligase (466 aa).

The protein belongs to the class-II aminoacyl-tRNA synthetase family. In terms of assembly, homodimer.

It localises to the cytoplasm. It catalyses the reaction tRNA(Asn) + L-asparagine + ATP = L-asparaginyl-tRNA(Asn) + AMP + diphosphate + H(+). This Shewanella sediminis (strain HAW-EB3) protein is Asparagine--tRNA ligase.